A 503-amino-acid polypeptide reads, in one-letter code: Putative aldehyde dehydrogenase-like protein C9E9.09c (503 aa).

Position 247–252 (247–252 (GSTGVG)) interacts with NAD(+). The residue at position 248 (serine 248) is a Phosphoserine. Residue glutamate 270 is the Proton acceptor of the active site. Cysteine 304 serves as the catalytic Nucleophile. A Phosphoserine modification is found at serine 501.

It belongs to the aldehyde dehydrogenase family.

The sequence is that of Putative aldehyde dehydrogenase-like protein C9E9.09c from Schizosaccharomyces pombe (strain 972 / ATCC 24843) (Fission yeast).